The following is a 146-amino-acid chain: Protein JTB (146 aa).

A signal peptide spans 1 to 30 (MLAGAGRPGLPQGRHLCWLLCAFTLKLCQA). Topologically, residues 31 to 105 (EAPVQEEKLS…CRSALMEQRL (75 aa)) are extracellular. Residues 106 to 126 (FWKFEGAVVCVALIFACLVII) traverse the membrane as a helical segment. Topologically, residues 127–146 (RQRQLDRKALEKVRKQIESI) are cytoplasmic.

The protein belongs to the JTB family. In terms of assembly, interacts with AURKA, AURKB, BIRC5 and INCENP. May be a component of the CPC at least composed of BIRC5/survivin, CDCA8/borealin, INCENP and AURKB/Aurora-B. Ubiquitous. Expressed in all normal human tissues studied but overexpressed or underexpressed in many of their malignant counterparts.

The protein localises to the membrane. The protein resides in the mitochondrion. It localises to the cytoplasm. Its subcellular location is the cytoskeleton. It is found in the microtubule organizing center. The protein localises to the centrosome. The protein resides in the spindle. Required for normal cytokinesis during mitosis. Plays a role in the regulation of cell proliferation. May be a component of the chromosomal passenger complex (CPC), a complex that acts as a key regulator of mitosis. The CPC complex has essential functions at the centromere in ensuring correct chromosome alignment and segregation and is required for chromatin-induced microtubule stabilization and spindle assembly. Increases AURKB activity. Inhibits apoptosis induced by TGFB1. Overexpression induces swelling of mitochondria and reduces mitochondrial membrane potential. In Homo sapiens (Human), this protein is Protein JTB (JTB).